Consider the following 364-residue polypeptide: Endopolygalacturonase B (364 aa).

A signal peptide spans 1–20; the sequence is MHFLQNSLIAAAMGAALVAA. A propeptide spanning residues 21–29 is cleaved from the precursor; that stretch reads APAADLDAR. Cys32 and Cys47 form a disulfide bridge. Asn138 carries an N-linked (GlcNAc...) asparagine glycan. PbH1 repeat units follow at residues 159-188, 189-210, 211-231, 240-261, 269-291, and 303-348; these read SDHL…DIGS, STYI…AINS, GEHI…SIGS, VKSV…RIKT, VTDV…IVEQ, and TNGV…DITG. Catalysis depends on Asp203, which acts as the Proton donor. A disulfide bridge links Cys205 with Cys221. His225 is an active-site residue. Intrachain disulfides connect Cys331/Cys336 and Cys355/Cys364.

Belongs to the glycosyl hydrolase 28 family.

Its subcellular location is the secreted. It catalyses the reaction (1,4-alpha-D-galacturonosyl)n+m + H2O = (1,4-alpha-D-galacturonosyl)n + (1,4-alpha-D-galacturonosyl)m.. Its function is as follows. Involved in maceration and soft-rotting of plant tissue. Hydrolyzes the 1,4-alpha glycosidic bonds of de-esterified pectate in the smooth region of the plant cell wall. The protein is Endopolygalacturonase B (pgaB) of Emericella nidulans (strain FGSC A4 / ATCC 38163 / CBS 112.46 / NRRL 194 / M139) (Aspergillus nidulans).